The chain runs to 513 residues: Anthranilate synthase component 1 (513 aa).

Residues Ser-50 and 279-281 each bind L-tryptophan; that span reads PYM. 314-315 lines the chorismate pocket; sequence GT. Glu-341 is a Mg(2+) binding site. Chorismate contacts are provided by residues Tyr-429, Arg-449, 463-465, and Gly-465; that span reads GAG. Residue Glu-478 participates in Mg(2+) binding.

This sequence belongs to the anthranilate synthase component I family. As to quaternary structure, heterotetramer consisting of two non-identical subunits: a beta subunit (TrpG) and a large alpha subunit (TrpE). It depends on Mg(2+) as a cofactor.

It catalyses the reaction chorismate + L-glutamine = anthranilate + pyruvate + L-glutamate + H(+). Its pathway is amino-acid biosynthesis; L-tryptophan biosynthesis; L-tryptophan from chorismate: step 1/5. Its activity is regulated as follows. Feedback inhibited by tryptophan. Functionally, part of a heterotetrameric complex that catalyzes the two-step biosynthesis of anthranilate, an intermediate in the biosynthesis of L-tryptophan. In the first step, the glutamine-binding beta subunit (TrpG) of anthranilate synthase (AS) provides the glutamine amidotransferase activity which generates ammonia as a substrate that, along with chorismate, is used in the second step, catalyzed by the large alpha subunit of AS (TrpE) to produce anthranilate. In the absence of TrpG, TrpE can synthesize anthranilate directly from chorismate and high concentrations of ammonia. In Bacillus pumilus (Bacillus mesentericus), this protein is Anthranilate synthase component 1 (trpE).